We begin with the raw amino-acid sequence, 294 residues long: Glutamyl-Q tRNA(Asp) synthetase (294 aa).

Residues 7–11 (RFAPS) and Glu-43 contribute to the L-glutamate site. The short motif at 10 to 20 (PSPSGPLHFGS) is the 'HIGH' region element. Zn(2+) contacts are provided by Cys-99, Cys-101, Tyr-113, and Cys-117. The L-glutamate site is built by Tyr-168 and Arg-186. A 'KMSKS' region motif is present at residues 224–228 (KLSKQ). Lys-227 is an ATP binding site.

The protein belongs to the class-I aminoacyl-tRNA synthetase family. GluQ subfamily. Zn(2+) is required as a cofactor.

Functionally, catalyzes the tRNA-independent activation of glutamate in presence of ATP and the subsequent transfer of glutamate onto a tRNA(Asp). Glutamate is transferred on the 2-amino-5-(4,5-dihydroxy-2-cyclopenten-1-yl) moiety of the queuosine in the wobble position of the QUC anticodon. The polypeptide is Glutamyl-Q tRNA(Asp) synthetase (Vibrio parahaemolyticus serotype O3:K6 (strain RIMD 2210633)).